The following is a 158-amino-acid chain: NADH-quinone oxidoreductase subunit B (158 aa).

Cysteine 37, cysteine 38, cysteine 102, and cysteine 132 together coordinate [4Fe-4S] cluster.

Belongs to the complex I 20 kDa subunit family. NDH-1 is composed of 14 different subunits. Subunits NuoB, C, D, E, F, and G constitute the peripheral sector of the complex. [4Fe-4S] cluster is required as a cofactor.

The protein localises to the cell inner membrane. It catalyses the reaction a quinone + NADH + 5 H(+)(in) = a quinol + NAD(+) + 4 H(+)(out). Functionally, NDH-1 shuttles electrons from NADH, via FMN and iron-sulfur (Fe-S) centers, to quinones in the respiratory chain. Couples the redox reaction to proton translocation (for every two electrons transferred, four hydrogen ions are translocated across the cytoplasmic membrane), and thus conserves the redox energy in a proton gradient. This is NADH-quinone oxidoreductase subunit B from Bordetella avium (strain 197N).